We begin with the raw amino-acid sequence, 914 residues long: Probable dipeptidyl-aminopeptidase B (914 aa).

The span at 1 to 10 (MGKSEADEDA) shows a compositional bias: acidic residues. A disordered region spans residues 1–81 (MGKSEADEDA…DQPFLPSRKG (81 aa)). Residues 1–89 (MGKSEADEDA…KGSGARARRV (89 aa)) lie on the Cytoplasmic side of the membrane. The span at 20–34 (SSSAASQTSSDSGLS) shows a compositional bias: low complexity. The chain crosses the membrane as a helical; Signal-anchor for type II membrane protein span at residues 90 to 110 (FWGLLLLCLAGWVLAFVLFLI). Residues 111 to 914 (QGRSGYSATS…FKRALPVFVH (804 aa)) lie on the Vacuolar side of the membrane. Residues N347 and N638 are each glycosylated (N-linked (GlcNAc...) asparagine). S752 acts as the Charge relay system in catalysis. N806 carries N-linked (GlcNAc...) asparagine glycosylation. Catalysis depends on charge relay system residues D829 and H862.

It belongs to the peptidase S9B family.

Its subcellular location is the vacuole membrane. The enzyme catalyses Release of an N-terminal dipeptide, Xaa-Yaa-|-Zaa-, from a polypeptide, preferentially when Yaa is Pro, provided Zaa is neither Pro nor hydroxyproline.. Type IV dipeptidyl-peptidase which removes N-terminal dipeptides sequentially from polypeptides having unsubstituted N-termini provided that the penultimate residue is proline. The polypeptide is Probable dipeptidyl-aminopeptidase B (dapB) (Aspergillus terreus (strain NIH 2624 / FGSC A1156)).